The chain runs to 146 residues: Ribosome-binding factor A (146 aa).

Positions 122–146 (QQQFGSVDDVTENDIDEADDTEGKA) are disordered. Over residues 130–146 (DVTENDIDEADDTEGKA) the composition is skewed to acidic residues.

It belongs to the RbfA family. As to quaternary structure, monomer. Binds 30S ribosomal subunits, but not 50S ribosomal subunits or 70S ribosomes.

Its subcellular location is the cytoplasm. Functionally, one of several proteins that assist in the late maturation steps of the functional core of the 30S ribosomal subunit. Associates with free 30S ribosomal subunits (but not with 30S subunits that are part of 70S ribosomes or polysomes). Required for efficient processing of 16S rRNA. May interact with the 5'-terminal helix region of 16S rRNA. This chain is Ribosome-binding factor A, found in Shewanella sp. (strain MR-7).